The sequence spans 66 residues: Beta-defensin 107A (66 aa).

Positions 1–22 (MKIFFFIFAALFLLAQIFQART) are cleaved as a signal peptide. 2 cysteine pairs are disulfide-bonded: Cys-37-Cys-51 and Cys-41-Cys-60.

This sequence belongs to the beta-defensin family.

The protein localises to the secreted. Functionally, has antibacterial activity. This chain is Beta-defensin 107A (DEFB107A), found in Gorilla gorilla gorilla (Western lowland gorilla).